Consider the following 233-residue polypeptide: Pirin-like protein YhaK (233 aa).

This sequence belongs to the pirin family. Monomer.

It localises to the cytoplasm. In terms of biological role, does not have quercetin 2,3-dioxygenase activity. The chain is Pirin-like protein YhaK (yhaK) from Escherichia coli O157:H7.